The primary structure comprises 299 residues: Putative transposase InsZ (299 aa).

Residues 276 to 291 (PSRPRSVKISKTRYPV) show a composition bias toward basic residues. The disordered stretch occupies residues 276–299 (PSRPRSVKISKTRYPVKHSAAPLK).

The sequence is that of Putative transposase InsZ (insZ) from Escherichia coli (strain K12).